The chain runs to 504 residues: Maturase K (504 aa).

The protein belongs to the intron maturase 2 family. MatK subfamily.

The protein localises to the plastid. It localises to the chloroplast. In terms of biological role, usually encoded in the trnK tRNA gene intron. Probably assists in splicing its own and other chloroplast group II introns. The protein is Maturase K of Impatiens capensis (Spotted jewelweed).